Here is a 405-residue protein sequence, read N- to C-terminus: Venom serine protease 34 (405 aa).

A signal peptide spans 1-35 (MIFTNNIAAFQNVVLVKKVKIVLLIFYGSIMFSMT). Cystine bridges form between cysteine 42/cysteine 70 and cysteine 95/cysteine 111. The CUB domain occupies 42–147 (CDYYQNLNLG…EVRPIKRVKD (106 aa)). An N-linked (GlcNAc...) asparagine glycan is attached at asparagine 113. One can recognise a Peptidase S1 domain in the interval 161 to 397 (IVGGTNTGIN…YIDWIVSQTP (237 aa)). Cysteine 188 and cysteine 204 are oxidised to a cystine. Histidine 203 (charge relay system) is an active-site residue. 2 N-linked (GlcNAc...) asparagine glycosylation sites follow: asparagine 209 and asparagine 229. Catalysis depends on aspartate 257, which acts as the Charge relay system. 2 disulfides stabilise this stretch: cysteine 323–cysteine 336 and cysteine 345–cysteine 375. Catalysis depends on serine 349, which acts as the Charge relay system.

It belongs to the peptidase S1 family. As to expression, expressed by the venom duct.

Its subcellular location is the secreted. The protein is Venom serine protease 34 of Apis mellifera (Honeybee).